The chain runs to 420 residues: Putative zinc metalloprotease Lmo1318 (420 aa).

Residue H18 coordinates Zn(2+). The active site involves E19. H22 serves as a coordination point for Zn(2+). A run of 4 helical transmembrane segments spans residues 172-194 (TIFA…LAFV), 304-326 (NWIV…LDML), 347-369 (VLNW…LPAL), and 393-412 (GIIH…LVTW). In terms of domain architecture, PDZ spans 176–267 (GPLFNFILAI…DGKTQDIDVK (92 aa)).

Belongs to the peptidase M50B family. The cofactor is Zn(2+).

It is found in the cell membrane. The protein is Putative zinc metalloprotease Lmo1318 of Listeria monocytogenes serovar 1/2a (strain ATCC BAA-679 / EGD-e).